The primary structure comprises 341 residues: Phosphate acyltransferase (341 aa).

The protein belongs to the PlsX family. In terms of assembly, homodimer. Probably interacts with PlsY.

Its subcellular location is the cytoplasm. The enzyme catalyses a fatty acyl-[ACP] + phosphate = an acyl phosphate + holo-[ACP]. It participates in lipid metabolism; phospholipid metabolism. Its function is as follows. Catalyzes the reversible formation of acyl-phosphate (acyl-PO(4)) from acyl-[acyl-carrier-protein] (acyl-ACP). This enzyme utilizes acyl-ACP as fatty acyl donor, but not acyl-CoA. The polypeptide is Phosphate acyltransferase (Elusimicrobium minutum (strain Pei191)).